The chain runs to 249 residues: MAKSRNEPGNIELPGFSDTLQLTPKIDKPHYAGHRDRLKQRFRDTPDALADYELLEMLLFRAIRRADTKPLAKALLMRFGSIAEVLAAPEKLIAEVPGAGPTVAHELKLVEAVAKRSARSTVMEREVLGSWNKVIEYCTAAMAYETREQFRILFLDKKNKLIADEVQQTGTVDHTPVYPREVVKRALELSATAIILVHNHPSGDPTPSRADIDMTKQLVNAAKALNITVHDHVIVGKHGHASFRGLGLI.

One can recognise an MPN domain in the interval Val-127 to Ile-249. 3 residues coordinate Zn(2+): His-198, His-200, and Asp-211. A JAMM motif motif is present at residues His-198–Asp-211.

Belongs to the UPF0758 family.

The protein is UPF0758 protein Oant_1909 of Brucella anthropi (strain ATCC 49188 / DSM 6882 / CCUG 24695 / JCM 21032 / LMG 3331 / NBRC 15819 / NCTC 12168 / Alc 37) (Ochrobactrum anthropi).